Consider the following 130-residue polypeptide: Secreted RxLR effector protein 66 (130 aa).

The N-terminal stretch at 1–21 is a signal peptide; the sequence is MHLRLLMSTVITATLIVSNNA. The short motif at 32-62 is the RxLR-dEER element; the sequence is RALRGASTVGIAADNLLAAHFSPTLKHKESR. Residues 104–124 traverse the membrane as a helical segment; that stretch reads GPAIAIFAGVAATFILIDYLI.

This sequence belongs to the RxLR effector family.

The protein localises to the secreted. It is found in the host cytoplasm. The protein resides in the host nucleus. It localises to the membrane. In terms of biological role, effector that acts as a broad suppressor of cell death to interrupt plant immunity. Inhibits cell death induced by cell death-inducing proteins, including the PAMP elicitor INF1 from P.infestans. The protein is Secreted RxLR effector protein 66 of Plasmopara viticola (Downy mildew of grapevine).